The primary structure comprises 158 residues: S-ribosylhomocysteine lyase (158 aa).

Residues His57, His61, and Cys125 each coordinate Fe cation.

The protein belongs to the LuxS family. In terms of assembly, homodimer. Requires Fe cation as cofactor.

The catalysed reaction is S-(5-deoxy-D-ribos-5-yl)-L-homocysteine = (S)-4,5-dihydroxypentane-2,3-dione + L-homocysteine. Functionally, involved in the synthesis of autoinducer 2 (AI-2) which is secreted by bacteria and is used to communicate both the cell density and the metabolic potential of the environment. The regulation of gene expression in response to changes in cell density is called quorum sensing. Catalyzes the transformation of S-ribosylhomocysteine (RHC) to homocysteine (HC) and 4,5-dihydroxy-2,3-pentadione (DPD). The protein is S-ribosylhomocysteine lyase of Deinococcus radiodurans (strain ATCC 13939 / DSM 20539 / JCM 16871 / CCUG 27074 / LMG 4051 / NBRC 15346 / NCIMB 9279 / VKM B-1422 / R1).